A 471-amino-acid chain; its full sequence is Glutamate--tRNA ligase (471 aa).

A 'HIGH' region motif is present at residues 9–19 (PSPTGYLHVGG). Residues Cys-98, Cys-100, Cys-125, and His-127 each contribute to the Zn(2+) site. The 'KMSKS' region signature appears at 237-241 (KLSKR). Lys-240 lines the ATP pocket.

This sequence belongs to the class-I aminoacyl-tRNA synthetase family. Glutamate--tRNA ligase type 1 subfamily. Monomer. The cofactor is Zn(2+).

The protein resides in the cytoplasm. The enzyme catalyses tRNA(Glu) + L-glutamate + ATP = L-glutamyl-tRNA(Glu) + AMP + diphosphate. Functionally, catalyzes the attachment of glutamate to tRNA(Glu) in a two-step reaction: glutamate is first activated by ATP to form Glu-AMP and then transferred to the acceptor end of tRNA(Glu). The sequence is that of Glutamate--tRNA ligase from Salmonella choleraesuis (strain SC-B67).